Consider the following 269-residue polypeptide: Probable cysteine protease avirulence protein AvrPpiC2 (269 aa).

The tract at residues 1–39 (MTIVSGHIGKHPSLTTVQAGSSASVENQMPDPAQFSDGR) is disordered. Positions 13–27 (SLTTVQAGSSASVEN) are enriched in polar residues. Residues cysteine 72, histidine 213, and aspartate 230 contribute to the active site.

The protein belongs to the peptidase C58 family.

Its function is as follows. Potential cysteine protease. Avirulence protein, which may be essential during infection of plant cells from Pea and some Arabidopsis thaliana cultivars. May act by affecting the plant defense system. In plants lacking appropriate resistance (R) gene, it probably impairs the plant defense system and leads to the bacteria multiplication. In contrast, in plants containing the appropriate R protein, it is unable to induce disease symptoms, explaining its avirulence name. The polypeptide is Probable cysteine protease avirulence protein AvrPpiC2 (avrPpiC2) (Pseudomonas syringae pv. pisi).